Reading from the N-terminus, the 218-residue chain is tRNA (guanine-N(7)-)-methyltransferase (218 aa).

S-adenosyl-L-methionine is bound by residues Glu45, Glu70, Asp97, and Asp119. Residue Asp119 is part of the active site. Lys123 contacts substrate. The segment at 125–130 is interaction with RNA; that stretch reads RHEKRR. Substrate is bound by residues Asp155 and 195–198; that span reads TEYE.

The protein belongs to the class I-like SAM-binding methyltransferase superfamily. TrmB family.

It catalyses the reaction guanosine(46) in tRNA + S-adenosyl-L-methionine = N(7)-methylguanosine(46) in tRNA + S-adenosyl-L-homocysteine. It participates in tRNA modification; N(7)-methylguanine-tRNA biosynthesis. Functionally, catalyzes the formation of N(7)-methylguanine at position 46 (m7G46) in tRNA. This is tRNA (guanine-N(7)-)-methyltransferase from Lactobacillus acidophilus (strain ATCC 700396 / NCK56 / N2 / NCFM).